The chain runs to 163 residues: Crossover junction endodeoxyribonuclease RuvC (163 aa).

Active-site residues include aspartate 7, glutamate 68, and histidine 142. Aspartate 7, glutamate 68, and histidine 142 together coordinate Mg(2+).

This sequence belongs to the RuvC family. Homodimer which binds Holliday junction (HJ) DNA. The HJ becomes 2-fold symmetrical on binding to RuvC with unstacked arms; it has a different conformation from HJ DNA in complex with RuvA. In the full resolvosome a probable DNA-RuvA(4)-RuvB(12)-RuvC(2) complex forms which resolves the HJ. Mg(2+) serves as cofactor.

It is found in the cytoplasm. It catalyses the reaction Endonucleolytic cleavage at a junction such as a reciprocal single-stranded crossover between two homologous DNA duplexes (Holliday junction).. Functionally, the RuvA-RuvB-RuvC complex processes Holliday junction (HJ) DNA during genetic recombination and DNA repair. Endonuclease that resolves HJ intermediates. Cleaves cruciform DNA by making single-stranded nicks across the HJ at symmetrical positions within the homologous arms, yielding a 5'-phosphate and a 3'-hydroxyl group; requires a central core of homology in the junction. The consensus cleavage sequence is 5'-(A/T)TT(C/G)-3'. Cleavage occurs on the 3'-side of the TT dinucleotide at the point of strand exchange. HJ branch migration catalyzed by RuvA-RuvB allows RuvC to scan DNA until it finds its consensus sequence, where it cleaves and resolves the cruciform DNA. The sequence is that of Crossover junction endodeoxyribonuclease RuvC from Anaplasma phagocytophilum (strain HZ).